A 115-amino-acid polypeptide reads, in one-letter code: Large ribosomal subunit protein bL31B (115 aa).

The protein belongs to the bacterial ribosomal protein bL31 family. Type B subfamily. In terms of assembly, part of the 50S ribosomal subunit.

This Polynucleobacter necessarius subsp. necessarius (strain STIR1) protein is Large ribosomal subunit protein bL31B.